Consider the following 440-residue polypeptide: UDP-N-acetylmuramoylalanine--D-glutamate ligase (440 aa).

115–121 is an ATP binding site; that stretch reads GSNGKST.

This sequence belongs to the MurCDEF family.

The protein resides in the cytoplasm. It carries out the reaction UDP-N-acetyl-alpha-D-muramoyl-L-alanine + D-glutamate + ATP = UDP-N-acetyl-alpha-D-muramoyl-L-alanyl-D-glutamate + ADP + phosphate + H(+). It functions in the pathway cell wall biogenesis; peptidoglycan biosynthesis. Functionally, cell wall formation. Catalyzes the addition of glutamate to the nucleotide precursor UDP-N-acetylmuramoyl-L-alanine (UMA). The sequence is that of UDP-N-acetylmuramoylalanine--D-glutamate ligase from Vibrio cholerae serotype O1 (strain ATCC 39315 / El Tor Inaba N16961).